We begin with the raw amino-acid sequence, 260 residues long: Chlorocatechol 1,2-dioxygenase (260 aa).

Residues tyrosine 130, tyrosine 164, histidine 188, and histidine 190 each contribute to the Fe cation site.

The protein belongs to the intradiol ring-cleavage dioxygenase family. Requires Fe(3+) as cofactor.

It carries out the reaction 3-chlorocatechol + O2 = (2E,4Z)-2-chloromuconate + 2 H(+). The enzyme catalyses 3,5-dichlorocatechol + O2 = (2E,4E)-2,4-dichloromuconate + 2 H(+). Its pathway is aromatic compound metabolism; 3-chlorocatechol degradation. In terms of biological role, preferentially converts 3-chlorocatechol and 3,5-dichlorocatechol as opposed to other chlorinated catechols. Retains diminished activity toward non-chlorinated substrates. This chain is Chlorocatechol 1,2-dioxygenase (clcA), found in Pseudomonas putida (Arthrobacter siderocapsulatus).